The sequence spans 294 residues: Glycine-rich protein 2 (294 aa).

Positions 1–20 (MKMWFRLATFVTLIIEFAHC) are cleaved as a signal peptide. Residues 205–221 (TGSQTGAAANGTSAGAA) are compositionally biased toward low complexity. Positions 205–225 (TGSQTGAAANGTSAGAAVRGG) are disordered.

As to expression, nacreous layer of shell (at protein level). Expressed primarily in the mantle with highest level in the mantle pallium and lower level in the mantle edge.

The protein localises to the secreted. The sequence is that of Glycine-rich protein 2 from Pinctada maxima (Silver-lipped pearl oyster).